A 423-amino-acid chain; its full sequence is uncharacterized protein (423 aa).

Residues 75–145 enclose the BON domain; sequence LHVVVTQPIA…PIVNNIKVAG (71 aa).

This sequence belongs to the bacterial secretin family.

In terms of biological role, involved in the secretion of an unknown compound. This is an uncharacterized protein from Sinorhizobium fredii (strain NBRC 101917 / NGR234).